A 370-amino-acid chain; its full sequence is DNA replication and repair protein RecF (370 aa).

Residue 30 to 37 coordinates ATP; that stretch reads GPNGSGKT.

It belongs to the RecF family.

It localises to the cytoplasm. Its function is as follows. The RecF protein is involved in DNA metabolism; it is required for DNA replication and normal SOS inducibility. RecF binds preferentially to single-stranded, linear DNA. It also seems to bind ATP. The sequence is that of DNA replication and repair protein RecF from Prosthecochloris aestuarii (strain DSM 271 / SK 413).